A 248-amino-acid polypeptide reads, in one-letter code: Probable transcriptional regulatory protein BARBAKC583_0163 (248 aa).

Belongs to the TACO1 family.

It is found in the cytoplasm. This chain is Probable transcriptional regulatory protein BARBAKC583_0163, found in Bartonella bacilliformis (strain ATCC 35685 / KC583 / Herrer 020/F12,63).